The primary structure comprises 382 residues: ATP phosphoribosyltransferase regulatory subunit (382 aa).

The protein belongs to the class-II aminoacyl-tRNA synthetase family. HisZ subfamily. In terms of assembly, heteromultimer composed of HisG and HisZ subunits.

It localises to the cytoplasm. The protein operates within amino-acid biosynthesis; L-histidine biosynthesis; L-histidine from 5-phospho-alpha-D-ribose 1-diphosphate: step 1/9. In terms of biological role, required for the first step of histidine biosynthesis. May allow the feedback regulation of ATP phosphoribosyltransferase activity by histidine. The sequence is that of ATP phosphoribosyltransferase regulatory subunit from Burkholderia ambifaria (strain MC40-6).